A 129-amino-acid polypeptide reads, in one-letter code: Small ribosomal subunit protein uS11 (129 aa).

This sequence belongs to the universal ribosomal protein uS11 family. In terms of assembly, part of the 30S ribosomal subunit. Interacts with proteins S7 and S18. Binds to IF-3.

In terms of biological role, located on the platform of the 30S subunit, it bridges several disparate RNA helices of the 16S rRNA. Forms part of the Shine-Dalgarno cleft in the 70S ribosome. This chain is Small ribosomal subunit protein uS11, found in Hyphomonas neptunium (strain ATCC 15444).